Here is a 650-residue protein sequence, read N- to C-terminus: 1-deoxy-D-xylulose-5-phosphate synthase (650 aa).

Thiamine diphosphate is bound by residues His-87 and Gly-128–Ser-130. Mg(2+) is bound at residue Asp-159. Residues Gly-160 to Ser-161, Asn-188, Tyr-299, and Glu-383 contribute to the thiamine diphosphate site. Asn-188 contributes to the Mg(2+) binding site.

This sequence belongs to the transketolase family. DXPS subfamily. Homodimer. Mg(2+) is required as a cofactor. The cofactor is thiamine diphosphate.

It catalyses the reaction D-glyceraldehyde 3-phosphate + pyruvate + H(+) = 1-deoxy-D-xylulose 5-phosphate + CO2. It participates in metabolic intermediate biosynthesis; 1-deoxy-D-xylulose 5-phosphate biosynthesis; 1-deoxy-D-xylulose 5-phosphate from D-glyceraldehyde 3-phosphate and pyruvate: step 1/1. Its function is as follows. Catalyzes the acyloin condensation reaction between C atoms 2 and 3 of pyruvate and glyceraldehyde 3-phosphate to yield 1-deoxy-D-xylulose-5-phosphate (DXP). The chain is 1-deoxy-D-xylulose-5-phosphate synthase from Syntrophus aciditrophicus (strain SB).